The primary structure comprises 460 residues: Interleukin-6 receptor subunit alpha (460 aa).

Residues 1–19 (MLTVGCTLLVALLAAPAVA) form the signal peptide. The Ig-like C2-type domain occupies 20 to 116 (LVLGSCRALE…DVPPEEPKLS (97 aa)). The Extracellular segment spans residues 20-364 (LVLGSCRALE…VQESSSMSLP (345 aa)). 4 disulfides stabilise this stretch: Cys-25–Cys-190, Cys-47–Cys-92, Cys-117–Cys-128, and Cys-162–Cys-173. Residues Asn-32 and Asn-55 are each glycosylated (N-linked (GlcNAc...) asparagine). Fibronectin type-III domains lie at 109–214 (PPEE…VQPD) and 215–313 (PPAN…TPWI). N-linked (GlcNAc...) asparagine glycosylation occurs at Asn-150. The N-linked (GlcNAc...) asparagine glycan is linked to Asn-218. Residues 300–304 (WSEWS) carry the WSXWS motif motif. The chain crosses the membrane as a helical span at residues 365-385 (TFLVAGGSLAFGLLLCVFIIL). Topologically, residues 386 to 460 (RLKQKWKSEA…NSNRDYLFPR (75 aa)) are cytoplasmic.

It belongs to the type I cytokine receptor family. Type 3 subfamily. Component of a hexamer of two molecules each of IL6, IL6R and IL6ST; first binds to IL6 to associate with the signaling subunit IL6ST. Interacts (via N-terminal ectodomain) with SORL1; this interaction may affect IL6-binding to IL6R, hence decrease IL6 'classic-signaling'. In terms of assembly, also interacts with SORL1; this interaction leads to soluble IL6R internalization. May form a trimeric complex with the soluble SORL1 ectodomain and circulating IL6 receptor; this interaction might stabilize circulating IL6, hence promote IL6 'trans-signaling'. A short soluble form is also released from the membrane by proteolysis. The sIL6R is formed by limited proteolysis of membrane-bound receptors, a process referred to as ectodomain shedding. mIL6R is cleaved by the proteases ADAM10 and ADAM17. Post-translationally, glycosylated. Glycosylation is dispensable for transport, signaling, and cell-surface turnover. Glycosylation at Asn-55 is a protease-regulatory exosite. Glycosylation is required for ADAM17-mediated proteolysis. In terms of tissue distribution, expressed by dendritic cells. As to expression, detected in the cerebrospinal fluid.

The protein resides in the cell membrane. The protein localises to the secreted. With respect to regulation, classic and trans-signaling are both inhibited by tocilizumab, a humanized monoclonal antibody that blocks interleukin IL6R signaling. Part of the receptor for interleukin 6. Binds to IL6 with low affinity, but does not transduce a signal. Signal activation necessitate an association with IL6ST. Activation leads to the regulation of the immune response, acute-phase reactions and hematopoiesis. The interaction with membrane-bound IL6R and IL6ST stimulates 'classic signaling', the restricted expression of the IL6R limits classic IL6 signaling to only a few tissues such as the liver and some cells of the immune system. Whereas the binding of IL6 and soluble IL6R to IL6ST stimulates 'trans-signaling'. Alternatively, 'cluster signaling' occurs when membrane-bound IL6:IL6R complexes on transmitter cells activate IL6ST receptors on neighboring receiver cells. In terms of biological role, signaling via the membrane-bound IL6R is mostly regenerative and anti-inflammatory. Drives naive CD4(+) T cells to the Th17 lineage, through 'cluster signaling' by dendritic cells. Its function is as follows. Soluble form of IL6 receptor (sIL6R) that acts as an agonist of IL6 activity. The IL6:sIL6R complex (hyper-IL6) binds to IL6ST/gp130 on cell surfaces and induces signaling also on cells that do not express membrane-bound IL6R in a process called IL6 'trans-signaling'. sIL6R is causative for the pro-inflammatory properties of IL6 and an important player in the development of chronic inflammatory diseases. In complex with IL6, is required for induction of VEGF production. Plays a protective role during liver injury, being required for maintenance of tissue regeneration. 'Trans-signaling' in central nervous system regulates energy and glucose homeostasis. The sequence is that of Interleukin-6 receptor subunit alpha from Mus musculus (Mouse).